We begin with the raw amino-acid sequence, 846 residues long: FNIP repeat-containing protein DDB_G0289381 (846 aa).

Positions 1-11 are enriched in basic residues; it reads MKLLSFKKKPS. Residues 1–39 are disordered; that stretch reads MKLLSFKKKPSLTKSQSCPDKLKNLKEQQKDPKNGANYD. Residues 20–33 are compositionally biased toward basic and acidic residues; sequence DKLKNLKEQQKDPK. FNIP repeat units follow at residues 159-193, 194-239, 240-283, and 284-325; these read IPNH…FGEK, FNQV…FGNN, FDQI…FQEN, and FNQP…YGGD. The segment at 362 to 384 is disordered; it reads SSISLDISGGGSGSGSGVNSTTT. FNIP repeat units follow at residues 458–500, 501–546, and 654–693; these read FQQL…FGDG, FNQQ…FGKS, and FNQS…MFNK. The interval 702–734 is disordered; that stretch reads SNNNNENNNENNNENNNENNNENNNENNNNTNS. Positions 702–734 form a coiled coil; the sequence is SNNNNENNNENNNENNNENNNENNNENNNNTNS.

The polypeptide is FNIP repeat-containing protein DDB_G0289381 (Dictyostelium discoideum (Social amoeba)).